The primary structure comprises 276 residues: Halorhodopsin (276 aa).

The propeptide occupies 1–20 (MTAASTTATTVLQATQSDVL). Position 21 is a pyrrolidone carboxylic acid (Q21). 7 helical membrane passes run 31–51 (SSIW…VAMG), 61–81 (LIWV…AGLA), 109–129 (YLTW…LADT), 134–154 (LFTA…AALI), 162–182 (WVFY…LLVQ), 195–215 (IFGT…ILWA), and 220–240 (GVAL…DILA). An N6-(retinylidene)lysine modification is found at K241.

Belongs to the archaeal/bacterial/fungal opsin family. Post-translationally, the covalent binding of retinal to the apoprotein, bacterioopsin, generates bacteriorhodopsin.

Its subcellular location is the membrane. In terms of biological role, light-driven chloride pump. The chain is Halorhodopsin (hop) from Haloarcula marismortui (strain ATCC 43049 / DSM 3752 / JCM 8966 / VKM B-1809) (Halobacterium marismortui).